We begin with the raw amino-acid sequence, 39 residues long: MKVRPSVKPMCDQCRVIKRNGRVMVICSANPKHKQRQGK.

It belongs to the bacterial ribosomal protein bL36 family.

This chain is Large ribosomal subunit protein bL36, found in Oenococcus oeni (strain ATCC BAA-331 / PSU-1).